A 172-amino-acid chain; its full sequence is Small t antigen (172 aa).

N-acetylmethionine; by host is present on M1. The 64-residue stretch at 12–75 (ELMDLLGLDR…VKVAHQPDFG (64 aa)) folds into the J domain. The C4-type; atypical zinc-finger motif lies at 101–114 (CATNPSVHCPCLMC). The segment at 120–141 (HRNRKFLRSSPLVWIDCYCFDC) adopts an H1C3-type; atypical zinc-finger fold.

In terms of assembly, interacts with host PPP2R1A; the interaction inhibits PP2A activity. Interacts with agnoprotein; this interaction prevents agnoprotein dephosphorylation by host PP2A. Interacts with host RBL1 and RBL2. Interacts with SMARCA5. Interacts with SDHB.

It is found in the host cytoplasm. Its subcellular location is the host nucleus. Functionally, promotes efficient viral genome replication by modulating several host signaling pathways including transport network, interferon production or cell cycle progression. Inhibits host PP2A phosphatase activity and thereby prevents agnoprotein dephosphorylation. Inactivation of PP2A also results in the transactivation of cyclin A and cyclin D1 promoters. In addition, antagonizes the RIGI-mediated IFN response through interaction with E3 ligase TRIM25 leading to the inhibition of 'Lys-63'-linked ubiquitination of RIGI. Inhibits nucleotide excision repair (NER) pathway which leads to DNA strand breaks during DNA replication and micronuclei formation. This chain is Small t antigen, found in JC polyomavirus (JCPyV).